The primary structure comprises 140 residues: Gonadotropin subunit beta-2 (140 aa).

Residues 1–23 (MSVPASSFLLLCFLMNSFSPAQS) form the signal peptide. Intrachain disulfides connect C29–C77, C43–C92, C46–C130, C54–C108, C58–C110, and C113–C120. N33 is a glycosylation site (N-linked (GlcNAc...) asparagine).

This sequence belongs to the glycoprotein hormones subunit beta family. Heterodimer of an alpha and a beta chain.

It localises to the secreted. Functionally, involved in gametogenesis and steroidogenesis. This chain is Gonadotropin subunit beta-2 (cgbb), found in Ictalurus punctatus (Channel catfish).